A 341-amino-acid polypeptide reads, in one-letter code: S-adenosylmethionine:tRNA ribosyltransferase-isomerase (341 aa).

Belongs to the QueA family. Monomer.

The protein localises to the cytoplasm. The enzyme catalyses 7-aminomethyl-7-carbaguanosine(34) in tRNA + S-adenosyl-L-methionine = epoxyqueuosine(34) in tRNA + adenine + L-methionine + 2 H(+). It participates in tRNA modification; tRNA-queuosine biosynthesis. Its function is as follows. Transfers and isomerizes the ribose moiety from AdoMet to the 7-aminomethyl group of 7-deazaguanine (preQ1-tRNA) to give epoxyqueuosine (oQ-tRNA). This chain is S-adenosylmethionine:tRNA ribosyltransferase-isomerase, found in Symbiobacterium thermophilum (strain DSM 24528 / JCM 14929 / IAM 14863 / T).